We begin with the raw amino-acid sequence, 376 residues long: 23S rRNA (uracil(747)-C(5))-methyltransferase RlmC (376 aa).

[4Fe-4S] cluster-binding residues include Cys-3, Cys-11, Cys-14, and Cys-87. Residues Gln-212, Phe-241, Glu-262, and Asn-307 each coordinate S-adenosyl-L-methionine. Cys-334 (nucleophile) is an active-site residue.

Belongs to the class I-like SAM-binding methyltransferase superfamily. RNA M5U methyltransferase family. RlmC subfamily.

It catalyses the reaction uridine(747) in 23S rRNA + S-adenosyl-L-methionine = 5-methyluridine(747) in 23S rRNA + S-adenosyl-L-homocysteine + H(+). In terms of biological role, catalyzes the formation of 5-methyl-uridine at position 747 (m5U747) in 23S rRNA. The chain is 23S rRNA (uracil(747)-C(5))-methyltransferase RlmC from Pectobacterium carotovorum subsp. carotovorum (strain PC1).